The primary structure comprises 235 residues: Intron-encoded endonuclease I-SceI (235 aa).

It belongs to the LAGLIDADG endonuclease family. Monomer. It depends on Mg(2+) as a cofactor.

Its subcellular location is the mitochondrion. Mitochondrial DNA endonuclease involved in intron homing. It introduces a specific double-strand break in the DNA of the 21S rRNA gene and thus mediates the insertion of an intron, containing its own coding sequence (group I intron), into an intronless gene. Specifically recognizes and cleaves the sequence 5'-TAGGGATAACAGGGTAAT-3'. This chain is Intron-encoded endonuclease I-SceI (SCEI), found in Saccharomyces cerevisiae (strain ATCC 204508 / S288c) (Baker's yeast).